The following is an 885-amino-acid chain: Pyruvate, phosphate dikinase (885 aa).

An N-terminal region spans residues 1-342 (MQRVYAFEDG…LYMLQTRNGK (342 aa)). Residue Arg91 participates in ATP binding. A linker 1 region spans residues 343–399 (MNATATVRTGVDMVEEGLITKEQAIMRIAPQSVDQLLHKNMPANYAEAPLVKGLPAS). The interval 400–497 (PGAATGAVVF…EVHEGDILTI (98 aa)) is central. Residue His454 is the Tele-phosphohistidine intermediate of the active site. Residues 498-533 (DGSTGCVYKGEVPLEEPQVGSGYFGTILKWANEIKK) form a linker 2 region. The C-terminal stretch occupies residues 534 to 885 (IGVFANADLP…QAQIRHPREN (352 aa)). Positions 561, 617, 752, 773, 774, 775, and 776 each coordinate substrate. Glu752 provides a ligand contact to Mg(2+). Asp776 provides a ligand contact to Mg(2+). Residue Cys839 is the Proton donor of the active site.

It belongs to the PEP-utilizing enzyme family. Homodimer. Requires Mg(2+) as cofactor.

It carries out the reaction pyruvate + phosphate + ATP = phosphoenolpyruvate + AMP + diphosphate + H(+). Functionally, catalyzes the dephosphorylation of phosphoenolpyruvate and diphosphate to produce ATP. The protein is Pyruvate, phosphate dikinase of Entamoeba histolytica (strain ATCC 30459 / HM-1:IMSS / ABRM).